Here is a 251-residue protein sequence, read N- to C-terminus: Esterase mlcF (251 aa).

Catalysis depends on charge relay system residues serine 126, aspartate 193, and histidine 221.

It belongs to the LovG family.

It carries out the reaction dihydro-ML-236C-[compactin nonaketide synthase] + H2O = holo-[compactin nonaketide synthase] + dihydro-ML-236C carboxylate + H(+). It participates in polyketide biosynthesis. Its function is as follows. Esterase; part of the gene cluster that mediates the biosynthesis of compactin, also known as mevastatin or ML-236B, and which acts as a potent competitive inhibitor of HMG-CoA reductase. Compactin biosynthesis is performed in two stages. The first stage is catalyzed by the nonaketide synthase mlcA, which belongs to type I polyketide synthases and catalyzes the iterative nine-step formation of the polyketide. This PKS stage is completed by the action of dehydrogenase mlcG, which catalyzes the NADPH-dependent reduction of the unsaturated tetra-, penta- and heptaketide intermediates that arise during the mlcA-mediated biosynthesis of the nonaketide chain and leads to dihydro-ML-236C carboxylate. Covalently bound dihydro-ML-236C carboxylate is released from mlcA by the mlcF esterase. Conversion of dihydro-ML-236C carboxylate into ML-236A carboxylate is subsequently performed with the participation of molecular oxygen and P450 monoogygenase mlcC. Finally, mlcH performs the conversion of ML-236A carboxylate to ML-236B/compactin carboxylate through the addition of the side-chain diketide moiety produced by the diketide synthase mlcB. In Penicillium citrinum, this protein is Esterase mlcF.